Consider the following 115-residue polypeptide: Glutaredoxin-like protein C5orf63 homolog (115 aa).

Cys40 and Cys43 are oxidised to a cystine.

It belongs to the glutaredoxin family. YDR286C subfamily.

In Mus musculus (Mouse), this protein is Glutaredoxin-like protein C5orf63 homolog.